A 239-amino-acid chain; its full sequence is ATP synthase subunit a (239 aa).

Helical transmembrane passes span 13 to 33, 75 to 95, 113 to 133, 174 to 194, and 208 to 230; these read IWFD…VFAF, FHLM…LGLV, DPIV…FFGM, GNIF…ASVG, and WVAF…SMVY.

Belongs to the ATPase A chain family. F-type ATPases have 2 components, CF(1) - the catalytic core - and CF(0) - the membrane proton channel. CF(1) has five subunits: alpha(3), beta(3), gamma(1), delta(1), epsilon(1). CF(0) has three main subunits: a(1), b(2) and c(9-12). The alpha and beta chains form an alternating ring which encloses part of the gamma chain. CF(1) is attached to CF(0) by a central stalk formed by the gamma and epsilon chains, while a peripheral stalk is formed by the delta and b chains.

It localises to the cell membrane. Functionally, key component of the proton channel; it plays a direct role in the translocation of protons across the membrane. This is ATP synthase subunit a from Enterococcus faecalis (strain ATCC 700802 / V583).